We begin with the raw amino-acid sequence, 434 residues long: MFS-type transporter pynF (434 aa).

Residues 1–13 (MSHDQRSPSEEVS) are compositionally biased toward basic and acidic residues. Residues 1 to 34 (MSHDQRSPSEEVSRTALSKPASESTIVGDGHHPL) are disordered. 12 helical membrane passes run 44–64 (WLVV…LNAF), 84–104 (IAWI…VVGP), 109–129 (VGAT…LMLT), 138–158 (LILA…YPTI), 171–191 (IALG…TEII), 203–223 (TVRA…VLII), 249–269 (LLFS…FFYL), 280–302 (VTGA…VLTG), 311–331 (FNVI…LHKI), 334–354 (SGAI…LISL), 375–395 (LMMG…GALL), and 402–422 (WYGF…VTIL).

It belongs to the major facilitator superfamily. Monocarboxylate porter (TC 2.A.1.13) family.

Its subcellular location is the cell membrane. Functionally, MFS-type transporter; part of the gene cluster that mediates the biosynthesis of pyranonigrins, a family of antioxidative compounds. May be involved in the secretion of pyranonigrins. In Aspergillus niger (strain ATCC MYA-4892 / CBS 513.88 / FGSC A1513), this protein is MFS-type transporter pynF.